The primary structure comprises 162 residues: F protein (162 aa).

The interval 1 to 23 (MSTNPKPQKKKTNVTPTVAHRTS) is disordered. A compositionally biased stretch (polar residues) spans 13-23 (NVTPTVAHRTS).

It is found in the host cytoplasm. It localises to the host perinuclear region. This is F protein from Hepatitis C virus genotype 1a (isolate 1) (HCV).